Consider the following 367-residue polypeptide: Porin Omp2a (367 aa).

Positions 1–22 (MNIKSLLLGSAAALVAASGAQA) are cleaved as a signal peptide.

It belongs to the alphaproteobacteria porin family. Monomer.

The protein resides in the cell outer membrane. In terms of biological role, forms passive diffusion pores that allow small molecular weight hydrophilic materials across the outer membrane. The sequence is that of Porin Omp2a (omp2a) from Brucella suis.